We begin with the raw amino-acid sequence, 563 residues long: Developmental regulatory protein wetA (563 aa).

Polar residues-rich tracts occupy residues 54–69 (EQSPIISTSKQQTHPS) and 160–175 (HKQSFSPSLTRPSQFQ). Disordered regions lie at residues 54-81 (EQSPIISTSKQQTHPSPQWAKDFWSLPP), 112-176 (ASST…QFQK), 272-318 (SNNS…PDLQ), 334-356 (PQRQPSYQQVVASPPPQQPIQNT), 430-494 (PQLH…SPKG), and 516-538 (GVAPSGSSKTKARREQEARDRRR). Residues 272–305 (SNNSTVTSSPPSADDIFPSPHSSDPQSMSSWHSD) show a composition bias toward low complexity. The segment covering 430–441 (PQLHPQSRSPSL) has biased composition (polar residues).

This sequence belongs to the wetA family.

In terms of biological role, brlA, abaA and wetA are pivotal regulators of conidiophore development and conidium maturation. They act individually and together to regulate their own expression and that of numerous other sporulation-specific genes. This is Developmental regulatory protein wetA from Aspergillus oryzae (strain ATCC 42149 / RIB 40) (Yellow koji mold).